The sequence spans 404 residues: Cysteine desulfurase IscS (404 aa).

Residues 75–76 (AT), Asn-155, Gln-183, and 203–205 (SGH) each bind pyridoxal 5'-phosphate. At Lys-206 the chain carries N6-(pyridoxal phosphate)lysine. Thr-243 provides a ligand contact to pyridoxal 5'-phosphate. The active-site Cysteine persulfide intermediate is the Cys-328. Cys-328 is a binding site for [2Fe-2S] cluster.

It belongs to the class-V pyridoxal-phosphate-dependent aminotransferase family. NifS/IscS subfamily. In terms of assembly, homodimer. Forms a heterotetramer with IscU, interacts with other sulfur acceptors. Pyridoxal 5'-phosphate is required as a cofactor.

The protein resides in the cytoplasm. It carries out the reaction (sulfur carrier)-H + L-cysteine = (sulfur carrier)-SH + L-alanine. It participates in cofactor biosynthesis; iron-sulfur cluster biosynthesis. Its function is as follows. Master enzyme that delivers sulfur to a number of partners involved in Fe-S cluster assembly, tRNA modification or cofactor biosynthesis. Catalyzes the removal of elemental sulfur atoms from cysteine to produce alanine. Functions as a sulfur delivery protein for Fe-S cluster synthesis onto IscU, an Fe-S scaffold assembly protein, as well as other S acceptor proteins. This Shewanella sp. (strain MR-4) protein is Cysteine desulfurase IscS.